The primary structure comprises 979 residues: Translation initiation factor IF-2 (979 aa).

The interval 33-391 (VKSHSSTITT…TPPAEITLTE (359 aa)) is disordered. Composition is skewed to low complexity over residues 54 to 63 (QKRPQAPKAQ) and 139 to 150 (AKTTSPKAEPAA). Over residues 151–166 (PAAPKPKLMGPPPRPT) the composition is skewed to pro residues. Over residues 234-252 (PELDEEPDTNNVEGDDDAT) the composition is skewed to acidic residues. 2 stretches are compositionally biased toward basic residues: residues 263–278 (PAAK…PSKR) and 294–303 (TKTSKLKRRP). The segment covering 314 to 328 (GTTTNNNAEVPSVSL) has biased composition (polar residues). Positions 371–380 (KEQRRDRPDV) are enriched in basic and acidic residues. Residues 468-641 (HRPPVVTIMG…LLVSEIEELS (174 aa)) form the tr-type G domain. A G1 region spans residues 477-484 (GHVDHGKT). GTP is bound at residue 477 to 484 (GHVDHGKT). The interval 502–506 (GITQH) is G2. Positions 527-530 (DTPG) are G3. Residues 527–531 (DTPGH) and 581–584 (NKMD) each bind GTP. The interval 581–584 (NKMD) is G4. The G5 stretch occupies residues 617–619 (SAL).

Belongs to the TRAFAC class translation factor GTPase superfamily. Classic translation factor GTPase family. IF-2 subfamily.

The protein localises to the cytoplasm. In terms of biological role, one of the essential components for the initiation of protein synthesis. Protects formylmethionyl-tRNA from spontaneous hydrolysis and promotes its binding to the 30S ribosomal subunits. Also involved in the hydrolysis of GTP during the formation of the 70S ribosomal complex. This chain is Translation initiation factor IF-2, found in Picosynechococcus sp. (strain ATCC 27264 / PCC 7002 / PR-6) (Agmenellum quadruplicatum).